The following is a 148-amino-acid chain: Deoxyuridine 5'-triphosphate nucleotidohydrolase (148 aa).

Residues 67–69 (RSG), Asn-80, 84–86 (LID), and Met-94 each bind substrate.

Belongs to the dUTPase family. Requires Mg(2+) as cofactor.

The enzyme catalyses dUTP + H2O = dUMP + diphosphate + H(+). The protein operates within pyrimidine metabolism; dUMP biosynthesis; dUMP from dCTP (dUTP route): step 2/2. Its function is as follows. This enzyme is involved in nucleotide metabolism: it produces dUMP, the immediate precursor of thymidine nucleotides and it decreases the intracellular concentration of dUTP so that uracil cannot be incorporated into DNA. The polypeptide is Deoxyuridine 5'-triphosphate nucleotidohydrolase (Ralstonia nicotianae (strain ATCC BAA-1114 / GMI1000) (Ralstonia solanacearum)).